The primary structure comprises 270 residues: 4-hydroxy-tetrahydrodipicolinate reductase (270 aa).

7 to 12 (GANGKM) serves as a coordination point for NAD(+). Position 34 (Arg-34) interacts with NADP(+). Residues 97 to 99 (GTT) and 121 to 124 (SGNM) contribute to the NAD(+) site. Residue His-155 is the Proton donor/acceptor of the active site. His-156 provides a ligand contact to (S)-2,3,4,5-tetrahydrodipicolinate. Catalysis depends on Lys-159, which acts as the Proton donor. 165 to 166 (GT) provides a ligand contact to (S)-2,3,4,5-tetrahydrodipicolinate.

This sequence belongs to the DapB family.

The protein localises to the cytoplasm. The catalysed reaction is (S)-2,3,4,5-tetrahydrodipicolinate + NAD(+) + H2O = (2S,4S)-4-hydroxy-2,3,4,5-tetrahydrodipicolinate + NADH + H(+). The enzyme catalyses (S)-2,3,4,5-tetrahydrodipicolinate + NADP(+) + H2O = (2S,4S)-4-hydroxy-2,3,4,5-tetrahydrodipicolinate + NADPH + H(+). Its pathway is amino-acid biosynthesis; L-lysine biosynthesis via DAP pathway; (S)-tetrahydrodipicolinate from L-aspartate: step 4/4. Its function is as follows. Catalyzes the conversion of 4-hydroxy-tetrahydrodipicolinate (HTPA) to tetrahydrodipicolinate. In Bartonella quintana (strain Toulouse) (Rochalimaea quintana), this protein is 4-hydroxy-tetrahydrodipicolinate reductase.